The sequence spans 236 residues: ATP synthase subunit a (236 aa).

5 helical membrane-spanning segments follow: residues 18 to 38, 80 to 100, 112 to 132, 179 to 199, and 200 to 220; these read SNLL…VLCT, VTLL…AIVI, DPAI…YYGI, ILLS…IGAA, and IPML…AFIF.

Belongs to the ATPase A chain family. As to quaternary structure, F-type ATPases have 2 components, CF(1) - the catalytic core - and CF(0) - the membrane proton channel. CF(1) has five subunits: alpha(3), beta(3), gamma(1), delta(1), epsilon(1). CF(0) has three main subunits: a(1), b(2) and c(9-12). The alpha and beta chains form an alternating ring which encloses part of the gamma chain. CF(1) is attached to CF(0) by a central stalk formed by the gamma and epsilon chains, while a peripheral stalk is formed by the delta and b chains.

The protein localises to the cell membrane. In terms of biological role, key component of the proton channel; it plays a direct role in the translocation of protons across the membrane. This is ATP synthase subunit a from Priestia megaterium (strain ATCC 12872 / QMB1551) (Bacillus megaterium).